We begin with the raw amino-acid sequence, 645 residues long: Acetyl-coenzyme A synthetase (645 aa).

Residues 190–193 (RGSK), threonine 308, and asparagine 332 contribute to the CoA site. ATP contacts are provided by residues 384 to 386 (GEP), 408 to 413 (DTWWQT), aspartate 497, and arginine 512. Serine 520 is a binding site for CoA. Arginine 523 serves as a coordination point for ATP. Residues valine 534, histidine 536, and valine 539 each coordinate Mg(2+). Residue arginine 581 coordinates CoA. The residue at position 606 (lysine 606) is an N6-acetyllysine.

The protein belongs to the ATP-dependent AMP-binding enzyme family. The cofactor is Mg(2+). In terms of processing, acetylated. Deacetylation by the SIR2-homolog deacetylase activates the enzyme.

The enzyme catalyses acetate + ATP + CoA = acetyl-CoA + AMP + diphosphate. In terms of biological role, catalyzes the conversion of acetate into acetyl-CoA (AcCoA), an essential intermediate at the junction of anabolic and catabolic pathways. AcsA undergoes a two-step reaction. In the first half reaction, AcsA combines acetate with ATP to form acetyl-adenylate (AcAMP) intermediate. In the second half reaction, it can then transfer the acetyl group from AcAMP to the sulfhydryl group of CoA, forming the product AcCoA. This Bdellovibrio bacteriovorus (strain ATCC 15356 / DSM 50701 / NCIMB 9529 / HD100) protein is Acetyl-coenzyme A synthetase.